Reading from the N-terminus, the 142-residue chain is Complexin (142 aa).

Disordered stretches follow at residues 13 to 70 and 83 to 105; these read QLSA…MRQD and IVEA…PEEL. The stretch at 29–138 forms a coiled coil; it reads GDDKEKAEEE…NELKTQIEGK (110 aa). Over residues 31–70 the composition is skewed to basic and acidic residues; it reads DKEKAEEEERERQEAIKEAEDRRKEKHRKMEEEREKMRQD. At Cys139 the chain carries Cysteine methyl ester. Cys139 carries S-farnesyl cysteine lipidation. A propeptide spans 140–142 (removed in mature form); the sequence is VMQ.

This sequence belongs to the complexin/synaphin family. Binds to the SNARE core complex containing Snap25, synaptobrevin and Syx1A.

Its subcellular location is the membrane. Its function is as follows. Positively regulates a late step in synaptic vesicle exocytosis. In Drosophila melanogaster (Fruit fly), this protein is Complexin (cpx).